The primary structure comprises 863 residues: Adenosylcobalamin biosynthesis bifunctional protein CobDQ (863 aa).

Residues 1–373 (MNLPEHGGNL…LKSRKKTPSI (373 aa)) are putative threonine-phosphate decarboxylase. O-phospho-L-threonine contacts are provided by residues 6–7 (HG), Asn30, and Asn159. Lys214 is subject to N6-(pyridoxal phosphate)lysine. O-phospho-L-threonine contacts are provided by Arg323 and Arg337. A cobyric acid synthase region spans residues 374–863 (MFQGTASNVG…NLIYRKLGLG (490 aa)). The GATase cobBQ-type domain occupies 622-810 (RLDVVLIDIP…IHGIFDKDEF (189 aa)). Cys704 acts as the Nucleophile in catalysis. His802 is an active-site residue.

In the N-terminal section; belongs to the class-II pyridoxal-phosphate-dependent aminotransferase family. The protein in the C-terminal section; belongs to the CobB/CobQ family. CobQ subfamily. Requires pyridoxal 5'-phosphate as cofactor.

It carries out the reaction O-phospho-L-threonine + H(+) = (R)-1-aminopropan-2-yl phosphate + CO2. The protein operates within cofactor biosynthesis; adenosylcobalamin biosynthesis. Catalyzes two activities which are involved in the adenosylcobalamin biosynthesis: decarboxylates L-threonine-O-3-phosphate to yield (R)-1-amino-2-propanol O-2-phosphate, the precursor for the linkage between the nucleotide loop and the corrin ring in cobalamin, and catalyzes amidations at positions B, D, E, and G on adenosylcobyrinic A,C-diamide. NH(2) groups are provided by glutamine, and one molecule of ATP is hydrogenolyzed for each amidation. This Leptospira interrogans serogroup Icterohaemorrhagiae serovar Lai (strain 56601) protein is Adenosylcobalamin biosynthesis bifunctional protein CobDQ (cobDQ).